A 291-amino-acid polypeptide reads, in one-letter code: MTTLAIDIGGTKLAAALIGADGQIRDRRELPTPASQTPEALRDALSALVSPLQAHAQRVAIASTGIIRDGSLLALNPHNLGGLLHFPLVKTLGQLTDLPTIAINDAQAAAWAEYQALEGDITDMVFITVSTGVGGGVVSGGKLLTGPGGLAGHIGHTLADPHGPVCGCGRTGCVEAIASGRGIAAAAQGELAGADAKTIFMRAGQGDEQAQQLIHRSAHVLARLIADIKATTDCQCVVVGGSVGLAEGYLALVETYLAQEPAAFHVDLLAAHYRHDAGLLGAALLAQGEKL.

Residues Ala-5–Lys-12 and Gly-132–Ser-139 contribute to the ATP site. Zn(2+)-binding residues include His-156, Cys-166, Cys-168, and Cys-173.

It belongs to the ROK (NagC/XylR) family. NanK subfamily. As to quaternary structure, homodimer.

It catalyses the reaction an N-acyl-D-mannosamine + ATP = an N-acyl-D-mannosamine 6-phosphate + ADP + H(+). The protein operates within amino-sugar metabolism; N-acetylneuraminate degradation; D-fructose 6-phosphate from N-acetylneuraminate: step 2/5. Functionally, catalyzes the phosphorylation of N-acetylmannosamine (ManNAc) to ManNAc-6-P. In Escherichia coli O157:H7, this protein is N-acetylmannosamine kinase.